The chain runs to 136 residues: Aspartate 1-decarboxylase (136 aa).

The Schiff-base intermediate with substrate; via pyruvic acid role is filled by Ser25. Ser25 is modified (pyruvic acid (Ser)). A substrate-binding site is contributed by Thr57. The active-site Proton donor is the Tyr58. 73–75 (GAA) is a substrate binding site.

Belongs to the PanD family. As to quaternary structure, heterooctamer of four alpha and four beta subunits. Requires pyruvate as cofactor. Is synthesized initially as an inactive proenzyme, which is activated by self-cleavage at a specific serine bond to produce a beta-subunit with a hydroxyl group at its C-terminus and an alpha-subunit with a pyruvoyl group at its N-terminus.

Its subcellular location is the cytoplasm. The catalysed reaction is L-aspartate + H(+) = beta-alanine + CO2. The protein operates within cofactor biosynthesis; (R)-pantothenate biosynthesis; beta-alanine from L-aspartate: step 1/1. Catalyzes the pyruvoyl-dependent decarboxylation of aspartate to produce beta-alanine. The sequence is that of Aspartate 1-decarboxylase from Corynebacterium efficiens (strain DSM 44549 / YS-314 / AJ 12310 / JCM 11189 / NBRC 100395).